A 500-amino-acid chain; its full sequence is Gamma-glutamylanilide synthase (500 aa).

The region spanning 32 to 136 (LGLEMIRLSW…MLADLHWKSG (105 aa)) is the GS beta-grasp domain. Residues 143–500 (PRGIMKKAVK…WEQKEYFNLL (358 aa)) form the GS catalytic domain.

It belongs to the glutamine synthetase family. As to quaternary structure, homohexamer.

The catalysed reaction is aniline + L-glutamate + ATP = N(5)-phenyl-L-glutamine + ADP + phosphate. Its function is as follows. Involved in the initial oxidation of aniline to catechol by the release of its amino group. Catalyzes the ATP-dependent ligation of L-glutamate to aniline to yield gamma-glutamylanilide (gamma-GA). AtdA1 has a broad substrate range and is able to convert the following anilines, including chlorinated and methylated forms of aniline: aniline (100%), o-chloroaniline (92%), m-chloroaniline (69%), p-chloroaniline (92%), o-methylaniline (40%), m-methylaniline (27%) and p-methylaniline (45%). In Acinetobacter sp, this protein is Gamma-glutamylanilide synthase.